Consider the following 134-residue polypeptide: Small ribosomal subunit protein uS9c (134 aa).

This sequence belongs to the universal ribosomal protein uS9 family.

It is found in the plastid. The protein resides in the chloroplast. This is Small ribosomal subunit protein uS9c (rps9) from Euglena gracilis.